A 101-amino-acid chain; its full sequence is NAD(P)H-quinone oxidoreductase subunit 4L, chloroplastic (101 aa).

3 helical membrane-spanning segments follow: residues 2 to 22 (MLEH…YGLI), 32 to 52 (MCLE…SDFF), and 61 to 81 (ILSI…LAIV).

The protein belongs to the complex I subunit 4L family. In terms of assembly, NDH is composed of at least 16 different subunits, 5 of which are encoded in the nucleus.

Its subcellular location is the plastid. It localises to the chloroplast thylakoid membrane. It catalyses the reaction a plastoquinone + NADH + (n+1) H(+)(in) = a plastoquinol + NAD(+) + n H(+)(out). The catalysed reaction is a plastoquinone + NADPH + (n+1) H(+)(in) = a plastoquinol + NADP(+) + n H(+)(out). In terms of biological role, NDH shuttles electrons from NAD(P)H:plastoquinone, via FMN and iron-sulfur (Fe-S) centers, to quinones in the photosynthetic chain and possibly in a chloroplast respiratory chain. The immediate electron acceptor for the enzyme in this species is believed to be plastoquinone. Couples the redox reaction to proton translocation, and thus conserves the redox energy in a proton gradient. In Buxus microphylla (Littleleaf boxwood), this protein is NAD(P)H-quinone oxidoreductase subunit 4L, chloroplastic.